Consider the following 593-residue polypeptide: Myc box-dependent-interacting protein 1 (593 aa).

The residue at position 2 (alanine 2) is an N-acetylalanine. Residues alanine 2–alanine 122 are interaction with BIN2. Coiled coils occupy residues alanine 15–glutamate 42 and histidine 193–leucine 267. In terms of domain architecture, BAR spans valine 29–serine 276. Disordered regions lie at residues threonine 280–lysine 354 and proline 400–serine 488. Serine 296, serine 298, and serine 303 each carry phosphoserine. 2 positions are modified to phosphothreonine: threonine 307 and threonine 323. The residue at position 331 (serine 331) is a Phosphoserine. Residues phenylalanine 378–glutamate 421 form a clathrin-binding region. An SH3 domain is found at glycine 520 to proline 593.

As to quaternary structure, heterodimer with AMPH. Binds SH3GLB1. Interacts (via SH3 domain) with DNM1. Interacts with SYNJ1. Interacts (via SH3 domain) with DNM2. Isoform IIA interacts with CLTC. Isoform IIB does not interact with CLTC. Isoform IIC1 does not interact with CLTC. Isoform IIC2 does not interact with CLTC. Interacts with AP2A2. Interacts with AP2B1. Interacts with MYC (via N-terminal transactivation domain); the interaction requires the integrity of the conserved MYC box regions 1 and 2. Interacts with BIN2. Interacts with SNX4. Interacts (via BAR domain) with BACE1. Binds (via BAR domain) F-actin. In terms of assembly, (Microbial infection) Interacts (SH3 domain) with HCV NS5A. In terms of processing, phosphorylated by protein kinase C. In terms of tissue distribution, ubiquitous. Highest expression in the brain and muscle. Expressed in oligodendrocytes. Isoform IIA is expressed only in the brain, where it is detected in the gray matter, but not in the white matter. Isoform BIN1 is widely expressed with highest expression in skeletal muscle.

It localises to the nucleus. Its subcellular location is the cytoplasm. The protein localises to the endosome. The protein resides in the cell membrane. It is found in the sarcolemma. It localises to the T-tubule. Functionally, is a key player in the control of plasma membrane curvature, membrane shaping and membrane remodeling. Required in muscle cells for the formation of T-tubules, tubular invaginations of the plasma membrane that function in depolarization-contraction coupling. Is a negative regulator of endocytosis. Is also involved in the regulation of intracellular vesicles sorting, modulation of BACE1 trafficking and the control of amyloid-beta production. In neuronal circuits, endocytosis regulation may influence the internalization of PHF-tau aggregates. May be involved in the regulation of MYC activity and the control cell proliferation. Has actin bundling activity and stabilizes actin filaments against depolymerization in vitro. The chain is Myc box-dependent-interacting protein 1 (BIN1) from Homo sapiens (Human).